The primary structure comprises 92 residues: Small ribosomal subunit protein uS19c (92 aa).

The protein belongs to the universal ribosomal protein uS19 family. Component of the chloroplast small ribosomal subunit (SSU). Mature 70S chloroplast ribosomes of higher plants consist of a small (30S) and a large (50S) subunit. The 30S small subunit contains 1 molecule of ribosomal RNA (16S rRNA) and 24 different proteins. The 50S large subunit contains 3 rRNA molecules (23S, 5S and 4.5S rRNA) and 33 different proteins. uS19c binds directly to 16S ribosomal RNA.

It is found in the plastid. The protein resides in the chloroplast. Its function is as follows. Component of the chloroplast ribosome (chloro-ribosome), a dedicated translation machinery responsible for the synthesis of chloroplast genome-encoded proteins, including proteins of the transcription and translation machinery and components of the photosynthetic apparatus. In Spinacia oleracea (Spinach), this protein is Small ribosomal subunit protein uS19c (rps19).